The sequence spans 291 residues: Insulin-like growth factor-binding protein 3 (291 aa).

Residues 1 to 27 form the signal peptide; that stretch reads MLRARPALWAAALTALTLLRGPPAARA. Residues 28-134 are IGF-binding; it reads GAGTMGAGPV…LRPYLLPSAS (107 aa). The IGFBP N-terminal domain maps to 36-119; the sequence is PVVRCEPCDA…LDGRGLCANA (84 aa). 6 disulfide bridges follow: Cys-40–Cys-69, Cys-43–Cys-71, Cys-51–Cys-72, Cys-60–Cys-75, Cys-83–Cys-96, and Cys-90–Cys-116. N-linked (GlcNAc...) asparagine glycosylation is found at Asn-118 and Asn-136. Disordered stretches follow at residues 132 to 162 and 177 to 211; these read SASG…RVPV and KGHA…TEYG. Residues 146–155 are compositionally biased toward polar residues; that stretch reads MGSTENQAGP. Ser-148 is subject to Phosphoserine. Over residues 177 to 190 the composition is skewed to basic and acidic residues; it reads KGHAKDSQRYKVDY. Over residues 191–202 the composition is skewed to polar residues; the sequence is ESQSTDTQNFSS. Residue Asn-199 is glycosylated (N-linked (GlcNAc...) asparagine). Ser-201 carries the post-translational modification Phosphoserine. A Thyroglobulin type-1 domain is found at 210–285; sequence YGPCRREMED…DVKGKGDVHC (76 aa). Cystine bridges form between Cys-213–Cys-240, Cys-251–Cys-262, and Cys-264–Cys-285.

Interacts with XLKD1. Binds IGF2 more than IGF1. Forms a ternary complex of about 140 to 150 kDa with IGF1 or IGF2 and a 85 kDa glycoprotein (ALS). Interacts with humanin; humanin competes with importin KPNB1 for binding to IGFBP3, blocking IGFBP3 nuclear import and IGFBP3-mediated apoptosis. Interacts with TMEM219. Interacts with RXRA; this interaction modulates the transcriptional activity of RXRA. Interacts with LRP1; this interaction mediates cell growth inhibition independent of IGF1. Post-translationally, phosphorylated by FAM20C in the extracellular medium. Phosphorylated by CK2; resulting in decreased nuclear localization. As to expression, plasma; expressed by most tissues.

It is found in the secreted. Its subcellular location is the nucleus. Its function is as follows. Multifunctional protein that plays a critical role in regulating the availability of IGFs such as IGF1 and IGF2 to their receptors and thereby regulates IGF-mediated cellular processes including proliferation, differentiation, and apoptosis in a cell-type specific manner. Also exhibits IGF-independent antiproliferative and apoptotic effects mediated by its receptor TMEM219/IGFBP-3R. Inhibits the positive effect of humanin on insulin sensitivity. Promotes testicular germ cell apoptosis. Acts via LRP-1/alpha2M receptor, also known as TGF-beta type V receptor, to mediate cell growth inhibition independent of IGF1. Mechanistically, induces serine-specific dephosphorylation of IRS1 or IRS2 upon ligation to its receptor, leading to the inhibitory cascade. In the nucleus, interacts with transcription factors such as retinoid X receptor-alpha/RXRA to regulate transcriptional signaling and apoptosis. The chain is Insulin-like growth factor-binding protein 3 (IGFBP3) from Bos taurus (Bovine).